Consider the following 254-residue polypeptide: Ribosomal RNA small subunit methyltransferase J (254 aa).

S-adenosyl-L-methionine-binding positions include 106–107 and aspartate 177; that span reads RD.

It belongs to the methyltransferase superfamily. RsmJ family.

The protein localises to the cytoplasm. It catalyses the reaction guanosine(1516) in 16S rRNA + S-adenosyl-L-methionine = N(2)-methylguanosine(1516) in 16S rRNA + S-adenosyl-L-homocysteine + H(+). Specifically methylates the guanosine in position 1516 of 16S rRNA. The chain is Ribosomal RNA small subunit methyltransferase J from Nitrosococcus oceani (strain ATCC 19707 / BCRC 17464 / JCM 30415 / NCIMB 11848 / C-107).